The sequence spans 336 residues: Fructose-1,6-bisphosphatase class 1 (336 aa).

Glutamate 92, aspartate 115, leucine 117, and aspartate 118 together coordinate Mg(2+). Residues 118–121, asparagine 211, tyrosine 244, 262–264, and lysine 274 each bind substrate; these read DGSS and YLY. Residue glutamate 280 coordinates Mg(2+).

This sequence belongs to the FBPase class 1 family. In terms of assembly, homotetramer. The cofactor is Mg(2+).

It localises to the cytoplasm. The catalysed reaction is beta-D-fructose 1,6-bisphosphate + H2O = beta-D-fructose 6-phosphate + phosphate. Its pathway is carbohydrate biosynthesis; gluconeogenesis. This chain is Fructose-1,6-bisphosphatase class 1, found in Vibrio atlanticus (strain LGP32) (Vibrio splendidus (strain Mel32)).